Here is a 696-residue protein sequence, read N- to C-terminus: MSSSLLAGGHMVSLTPCEESRMALHPTPSPGLPALCPYYTTESWGTQPLMAPTLRKGSSDRLQQAQQAEARAHCLLQGPGEQASGASQDLESCIDFSLEALNQMILEIDPTFQLLPSGTAGPQAESTNSIMSRNKKEEPEALDIKYIEVTSTRSRYLDGPQRCSSPCATPPFGSPRSGSLFLSRDIPRETRSSSNESLIFSGNQGRGPSPLTPSSLSNAIPCRESRTSGSPLATPPGWEKGLRAPQRGSRVSILSASPVSDVSYVFGSNQSLPHSSLSSYPSSSRSLGSPASSSSSLHSLDRGSQCGRPSDAQAPSNPILGMGQPQAVQSTPVAKEQASSCPASVTNSMADIPIVLINGSPEPQSPPAQRTPGHQDSVQSRVTSPSHLCQAIKSPSKTLPDVPLPASPDGPAKDMQPTMKFVMDTSKYWFKPSITREQAINLLRTEKPGAFVIRDSSSYRGSFGLALKVQETSASAPNRPGEDSSDLIRHFLIESSAKGVHLKGADEEPYFGSLSSFVCQHSIMALALPCKLTIPQKELGGAEPASDSPTHGQTSCLKISAGCHTLYLSSVSVETLSGALAVQKAISVTLERDVLPTPTVVHFKVTEQGITLTDVQRKVFFRRHYPLSALRFCGMDPEQRKWQKYCKPSRIFGFVAKSQTEPQENVCHLFAEYDAVQPASQVISLVTALLQDTERM.

The first 14 residues, 1-14 (MSSSLLAGGHMVSL), serve as a signal peptide directing secretion. Disordered stretches follow at residues 157-246 (LDGP…RAPQ), 271-344 (SLPH…CPAS), and 356-416 (LING…KDMQ). Polar residues predominate over residues 192 to 203 (SSSNESLIFSGN). Phosphoserine is present on Ser-230. Residues 271–304 (SLPHSSLSSYPSSSRSLGSPASSSSSLHSLDRGS) show a composition bias toward low complexity. Polar residues-rich tracts occupy residues 326–344 (QAVQ…CPAS) and 372–397 (PGHQ…SPSK). The SH2 domain maps to 429–536 (WFKPSITREQ…ALPCKLTIPQ (108 aa)). One can recognise a PTB domain in the interval 563–690 (CHTLYLSSVS…QVISLVTALL (128 aa)).

Belongs to the PTEN phosphatase protein family. In terms of assembly, interacts (via SH2 domain) with Rho GTPase-activating protein DLC1 (via C-terminus); the interaction is independent of DLC1 tyrosine phosphorylation. Interacts with integrin ITGB1; the interaction displaces tensin TNS3 from the ITGB1 cytoplasmic tail and promotes ITGB1 stability. Interacts (via SH2 domain) with E3 ubiquitin-protein ligase CBL (phosphorylated on 'Tyr-780'); the interaction is enhanced in the presence of EGF and reduces interaction of CBL with EGFR. Interacts (via SH2 domain) with receptor tyrosine kinase MET (when phosphorylated); the interaction increases MET protein stability.

It localises to the cell junction. The protein resides in the focal adhesion. It is found in the cytoplasm. The protein localises to the cytoskeleton. Promotes EGF-induced cell migration by displacing tensin TNS3 from the cytoplasmic tail of integrin ITGB1 which results in dissociation of TNS3 from focal adhesions, disassembly of actin stress fibers and initiation of cell migration. Suppresses ligand-induced degradation of EGFR by reducing EGFR ubiquitination in the presence of EGF. Increases MET protein stability by inhibiting MET endocytosis and subsequent lysosomal degradation which leads to increased cell survival, proliferation and migration. In Mus musculus (Mouse), this protein is Tensin-4 (Tns4).